We begin with the raw amino-acid sequence, 366 residues long: Peptide chain release factor 1 (366 aa).

Gln230 bears the N5-methylglutamine mark. 2 stretches are compositionally biased toward basic and acidic residues: residues 283 to 293 and 315 to 328; these read ARDAQEARDRA and VTDH…KNHP. The segment at 283–335 is disordered; sequence ARDAQEARDRAAQVGSGERSEKIRTYNYPQNRVTDHRLEGDSKNHPLDSVMAG.

This sequence belongs to the prokaryotic/mitochondrial release factor family. Methylated by PrmC. Methylation increases the termination efficiency of RF1.

It localises to the cytoplasm. Functionally, peptide chain release factor 1 directs the termination of translation in response to the peptide chain termination codons UAG and UAA. The protein is Peptide chain release factor 1 of Deinococcus deserti (strain DSM 17065 / CIP 109153 / LMG 22923 / VCD115).